Reading from the N-terminus, the 210-residue chain is V-type sodium ATPase subunit D (210 aa).

It belongs to the V-ATPase D subunit family.

In terms of biological role, involved in ATP-driven sodium extrusion. The chain is V-type sodium ATPase subunit D (ntpD) from Enterococcus hirae (strain ATCC 9790 / DSM 20160 / JCM 8729 / LMG 6399 / NBRC 3181 / NCIMB 6459 / NCDO 1258 / NCTC 12367 / WDCM 00089 / R).